Consider the following 431-residue polypeptide: Glutamyl-tRNA(Gln) amidotransferase subunit A (431 aa).

Residues Lys55 and Ser130 each act as charge relay system in the active site. The Acyl-ester intermediate role is filled by Ser154.

Belongs to the amidase family. GatA subfamily. In terms of assembly, heterotrimer of A, B and C subunits.

The enzyme catalyses L-glutamyl-tRNA(Gln) + L-glutamine + ATP + H2O = L-glutaminyl-tRNA(Gln) + L-glutamate + ADP + phosphate + H(+). In terms of biological role, allows the formation of correctly charged Gln-tRNA(Gln) through the transamidation of misacylated Glu-tRNA(Gln) in organisms which lack glutaminyl-tRNA synthetase. The reaction takes place in the presence of glutamine and ATP through an activated gamma-phospho-Glu-tRNA(Gln). The protein is Glutamyl-tRNA(Gln) amidotransferase subunit A of Methanococcus maripaludis (strain C5 / ATCC BAA-1333).